A 371-amino-acid polypeptide reads, in one-letter code: 4-hydroxy-3-methylbut-2-en-1-yl diphosphate synthase (flavodoxin) (371 aa).

[4Fe-4S] cluster contacts are provided by cysteine 272, cysteine 275, cysteine 307, and glutamate 314.

This sequence belongs to the IspG family. It depends on [4Fe-4S] cluster as a cofactor.

The catalysed reaction is (2E)-4-hydroxy-3-methylbut-2-enyl diphosphate + oxidized [flavodoxin] + H2O + 2 H(+) = 2-C-methyl-D-erythritol 2,4-cyclic diphosphate + reduced [flavodoxin]. Its pathway is isoprenoid biosynthesis; isopentenyl diphosphate biosynthesis via DXP pathway; isopentenyl diphosphate from 1-deoxy-D-xylulose 5-phosphate: step 5/6. In terms of biological role, converts 2C-methyl-D-erythritol 2,4-cyclodiphosphate (ME-2,4cPP) into 1-hydroxy-2-methyl-2-(E)-butenyl 4-diphosphate. This is 4-hydroxy-3-methylbut-2-en-1-yl diphosphate synthase (flavodoxin) from Pseudomonas aeruginosa (strain LESB58).